The primary structure comprises 133 residues: Small ribosomal subunit protein bS6 (133 aa).

The protein belongs to the bacterial ribosomal protein bS6 family.

In terms of biological role, binds together with bS18 to 16S ribosomal RNA. This Borrelia turicatae (strain 91E135) protein is Small ribosomal subunit protein bS6.